We begin with the raw amino-acid sequence, 375 residues long: Thioredoxin reductase 1, mitochondrial (375 aa).

The transit peptide at 1–37 (MNCVSRLKCLISKARSFARLGGESTLSQPPSLASAAF) directs the protein to the mitochondrion. Residues 58-61 (SGPA), 79-80 (FE), 87-92 (IAPGGQ), Asn101, Val134, Cys192, Asp337, and 344-346 (RQA) contribute to the FAD site. A disulfide bridge links Cys189 with Cys192.

This sequence belongs to the class-II pyridine nucleotide-disulfide oxidoreductase family. In terms of assembly, homodimer. FAD is required as a cofactor. As to expression, ubiquitous.

The protein localises to the cytoplasm. Its subcellular location is the mitochondrion. It catalyses the reaction [thioredoxin]-dithiol + NADP(+) = [thioredoxin]-disulfide + NADPH + H(+). NADPH-dependent thioredoxin-disulfide reductase that reduces thioredoxins O1, O2 and F3. The sequence is that of Thioredoxin reductase 1, mitochondrial (NTR1) from Arabidopsis thaliana (Mouse-ear cress).